A 296-amino-acid chain; its full sequence is Ribosomal RNA small subunit methyltransferase A (296 aa).

S-adenosyl-L-methionine is bound by residues asparagine 32, leucine 34, glycine 59, glutamate 80, aspartate 105, and asparagine 130.

It belongs to the class I-like SAM-binding methyltransferase superfamily. rRNA adenine N(6)-methyltransferase family. RsmA subfamily.

It localises to the cytoplasm. It carries out the reaction adenosine(1518)/adenosine(1519) in 16S rRNA + 4 S-adenosyl-L-methionine = N(6)-dimethyladenosine(1518)/N(6)-dimethyladenosine(1519) in 16S rRNA + 4 S-adenosyl-L-homocysteine + 4 H(+). Specifically dimethylates two adjacent adenosines (A1518 and A1519) in the loop of a conserved hairpin near the 3'-end of 16S rRNA in the 30S particle. May play a critical role in biogenesis of 30S subunits. This chain is Ribosomal RNA small subunit methyltransferase A, found in Lactiplantibacillus plantarum (strain ATCC BAA-793 / NCIMB 8826 / WCFS1) (Lactobacillus plantarum).